A 119-amino-acid chain; its full sequence is Ribonuclease P protein component (119 aa).

Belongs to the RnpA family. Consists of a catalytic RNA component (M1 or rnpB) and a protein subunit.

The catalysed reaction is Endonucleolytic cleavage of RNA, removing 5'-extranucleotides from tRNA precursor.. Its function is as follows. RNaseP catalyzes the removal of the 5'-leader sequence from pre-tRNA to produce the mature 5'-terminus. It can also cleave other RNA substrates such as 4.5S RNA. The protein component plays an auxiliary but essential role in vivo by binding to the 5'-leader sequence and broadening the substrate specificity of the ribozyme. This chain is Ribonuclease P protein component, found in Bacillus pumilus (strain SAFR-032).